The sequence spans 709 residues: Alpha-1,2-mannosyltransferase MNN24 (709 aa).

Residues 1 to 9 are Cytoplasmic-facing; sequence MFSIPVSSK. A helical membrane pass occupies residues 10–30; it reads TVRLILVSLLLITLINILAAF. Residues 31–709 are Extracellular-facing; that stretch reads QRSTLSSWFP…KNHIEFLEIS (679 aa). N317 carries an N-linked (GlcNAc...) asparagine glycan.

The protein belongs to the MNN1/MNT family.

Its subcellular location is the golgi apparatus membrane. It functions in the pathway protein modification; protein glycosylation. Functionally, alpha-1,2-mannosyltransferase required for cell wall integrity. Responsible for addition of the first alpha-1,2-linked mannose to form the branches on the mannan backbone of oligosaccharides. Addition of alpha-1,2-mannose is required for stabilization of the alpha-1,6-mannose backbone and hence regulates mannan fibril length; and is important for both immune recognition and virulence. The polypeptide is Alpha-1,2-mannosyltransferase MNN24 (MNN24) (Candida albicans (strain SC5314 / ATCC MYA-2876) (Yeast)).